The chain runs to 217 residues: Ribosomal RNA small subunit methyltransferase G (217 aa).

S-adenosyl-L-methionine-binding positions include Gly79, Leu84, 102–104 (DST), 130–131 (VE), and Arg144.

The protein belongs to the methyltransferase superfamily. RNA methyltransferase RsmG family.

The protein localises to the cytoplasm. In terms of biological role, specifically methylates the N7 position of a guanine in 16S rRNA. This is Ribosomal RNA small subunit methyltransferase G from Chlorobaculum tepidum (strain ATCC 49652 / DSM 12025 / NBRC 103806 / TLS) (Chlorobium tepidum).